A 471-amino-acid chain; its full sequence is Probable flavin-containing monoamine oxidase B (471 aa).

The residue at position 406 (Cys406) is an S-8alpha-FAD cysteine.

The protein belongs to the flavin monoamine oxidase family. FAD serves as cofactor.

It carries out the reaction a secondary aliphatic amine + O2 + H2O = a primary amine + an aldehyde + H2O2. This chain is Probable flavin-containing monoamine oxidase B (maoB-1), found in Dictyostelium discoideum (Social amoeba).